We begin with the raw amino-acid sequence, 202 residues long: Dephospho-CoA kinase (202 aa).

The DPCK domain occupies 4 to 200 (VVGVTGGIGS…QRYLAATVAQ (197 aa)). An ATP-binding site is contributed by 12–17 (GSGKSA).

The protein belongs to the CoaE family.

The protein resides in the cytoplasm. It catalyses the reaction 3'-dephospho-CoA + ATP = ADP + CoA + H(+). Its pathway is cofactor biosynthesis; coenzyme A biosynthesis; CoA from (R)-pantothenate: step 5/5. Functionally, catalyzes the phosphorylation of the 3'-hydroxyl group of dephosphocoenzyme A to form coenzyme A. This is Dephospho-CoA kinase from Idiomarina loihiensis (strain ATCC BAA-735 / DSM 15497 / L2-TR).